We begin with the raw amino-acid sequence, 471 residues long: Alpha-amylase (471 aa).

Glutamine 1 bears the Pyrrolidone carboxylic acid mark. An intrachain disulfide couples cysteine 28 to cysteine 84. 3 residues coordinate Ca(2+): asparagine 98, arginine 146, and aspartate 155. Cysteine 134 and cysteine 148 form a disulfide bridge. Arginine 183 contacts chloride. Aspartate 185 acts as the Nucleophile in catalysis. Histidine 189 provides a ligand contact to Ca(2+). Glutamate 222 (proton donor) is an active-site residue. The chloride site is built by asparagine 285 and arginine 321. Residues 326–343 (FDFTDNDQGPPQDGSGNL) show a composition bias toward polar residues. Residues 326 to 346 (FDFTDNDQGPPQDGSGNLISP) form a disordered region. 2 disulfides stabilise this stretch: cysteine 354/cysteine 360 and cysteine 425/cysteine 437.

The protein belongs to the glycosyl hydrolase 13 family. Monomer. Requires Ca(2+) as cofactor. Chloride serves as cofactor.

The enzyme catalyses Endohydrolysis of (1-&gt;4)-alpha-D-glucosidic linkages in polysaccharides containing three or more (1-&gt;4)-alpha-linked D-glucose units.. The chain is Alpha-amylase from Tenebrio molitor (Yellow mealworm beetle).